A 151-amino-acid polypeptide reads, in one-letter code: Putative coiled-coil-helix-coiled-coil-helix domain-containing protein CHCHD2P9, mitochondrial (151 aa).

A mitochondrion-targeting transit peptide spans 1-9 (MPRGSRSRT). 2 disordered regions span residues 1 to 50 (MPRG…AAAP) and 75 to 110 (TQGH…PAQQ). Over residues 10 to 26 (SRMAPPASRAPQMRAAP) the composition is skewed to low complexity. Residues 27-38 (RPAPVAQPPAAA) are compositionally biased toward pro residues. 2 stretches are compositionally biased toward low complexity: residues 39-50 (PPSAVGSSAAAP) and 100-110 (QEPQGTQPAQQ). Positions 111 to 151 (QQPCFYGIKQFLECAQNQGDIKLCEDFSKVLKQCRLAKGLA) constitute a CHCH domain. Short sequence motifs (cx9C motif) lie at residues 114-124 (CFYGIKQFLEC) and 134-144 (CEDFSKVLKQC). Disulfide bonds link Cys114–Cys144 and Cys124–Cys134.

The protein localises to the mitochondrion. In Homo sapiens (Human), this protein is Putative coiled-coil-helix-coiled-coil-helix domain-containing protein CHCHD2P9, mitochondrial (CHCHD2P9).